Reading from the N-terminus, the 511-residue chain is Glucans biosynthesis protein G (511 aa).

Positions 1–22 (MMKMRWLSAAVMLTLYTSSSWA) are cleaved as a signal peptide.

Belongs to the OpgD/OpgG family.

The protein resides in the periplasm. The protein operates within glycan metabolism; osmoregulated periplasmic glucan (OPG) biosynthesis. Involved in the biosynthesis of osmoregulated periplasmic glucans (OPGs). In Shigella dysenteriae serotype 1 (strain Sd197), this protein is Glucans biosynthesis protein G.